The following is a 394-amino-acid chain: Elongation factor Tu 2 (394 aa).

The tr-type G domain occupies Lys10 to Glu204. The segment at Gly19–Thr26 is G1. Gly19 to Thr26 contacts GTP. Thr26 is a binding site for Mg(2+). Residues Gly60–Ser64 form a G2 region. The G3 stretch occupies residues Asp81 to Gly84. GTP is bound by residues Asp81–His85 and Asn136–Asp139. A G4 region spans residues Asn136–Asp139. The tract at residues Ser174–Leu176 is G5.

Belongs to the TRAFAC class translation factor GTPase superfamily. Classic translation factor GTPase family. EF-Tu/EF-1A subfamily. As to quaternary structure, monomer.

The protein localises to the cytoplasm. It catalyses the reaction GTP + H2O = GDP + phosphate + H(+). Its function is as follows. GTP hydrolase that promotes the GTP-dependent binding of aminoacyl-tRNA to the A-site of ribosomes during protein biosynthesis. In Photobacterium profundum (strain SS9), this protein is Elongation factor Tu 2.